Reading from the N-terminus, the 109-residue chain is T cell receptor alpha variable 26-1 (109 aa).

A signal peptide spans 1 to 19 (MRLVARVTVFLTFGTIIDA). In terms of domain architecture, Ig-like spans 20–109 (KTTQPTSMDC…TAVYYCIVRV (90 aa)). Cysteine 39 and cysteine 105 form a disulfide bridge. Asparagine 40 and asparagine 71 each carry an N-linked (GlcNAc...) asparagine glycan.

Alpha-beta TR is a heterodimer composed of an alpha and beta chain; disulfide-linked. The alpha-beta TR is associated with the transmembrane signaling CD3 coreceptor proteins to form the TR-CD3 (TcR or TCR). The assembly of alpha-beta TR heterodimers with CD3 occurs in the endoplasmic reticulum where a single alpha-beta TR heterodimer associates with one CD3D-CD3E heterodimer, one CD3G-CD3E heterodimer and one CD247 homodimer forming a stable octameric structure. CD3D-CD3E and CD3G-CD3E heterodimers preferentially associate with TR alpha and TR beta chains, respectively. The association of the CD247 homodimer is the last step of TcR assembly in the endoplasmic reticulum and is required for transport to the cell surface.

Its subcellular location is the cell membrane. V region of the variable domain of T cell receptor (TR) alpha chain that participates in the antigen recognition. Alpha-beta T cell receptors are antigen specific receptors which are essential to the immune response and are present on the cell surface of T lymphocytes. Recognize peptide-major histocompatibility (MH) (pMH) complexes that are displayed by antigen presenting cells (APC), a prerequisite for efficient T cell adaptive immunity against pathogens. Binding of alpha-beta TR to pMH complex initiates TR-CD3 clustering on the cell surface and intracellular activation of LCK that phosphorylates the ITAM motifs of CD3G, CD3D, CD3E and CD247 enabling the recruitment of ZAP70. In turn ZAP70 phosphorylates LAT, which recruits numerous signaling molecules to form the LAT signalosome. The LAT signalosome propagates signal branching to three major signaling pathways, the calcium, the mitogen-activated protein kinase (MAPK) kinase and the nuclear factor NF-kappa-B (NF-kB) pathways, leading to the mobilization of transcription factors that are critical for gene expression and essential for T cell growth and differentiation. The T cell repertoire is generated in the thymus, by V-(D)-J rearrangement. This repertoire is then shaped by intrathymic selection events to generate a peripheral T cell pool of self-MH restricted, non-autoaggressive T cells. Post-thymic interaction of alpha-beta TR with the pMH complexes shapes TR structural and functional avidity. The chain is T cell receptor alpha variable 26-1 from Homo sapiens (Human).